A 354-amino-acid polypeptide reads, in one-letter code: MHHPLPPDDTLYDQVRPILWTGHFLKLLDQRKLPFVVEYVECHSSEDVTQAIRALIVRGAPAIGIVAGWGAVLAAREIEAVDGIEALRKLEPALQRLHAARPTAVNLAWVLARMRRTLSAAHADWRQAMAREAESIAREDLTANRCMGAYGAALIPIGSGVLTHCNTGSLATAGFGTALGVIRAGIAQGRIARVFAGETRPWLQGARLTVWELQQDGIDVTLIADSAAAHLMKSGQVQWVIVGADRICANGDAANKIGTYQLAITARHHGVKFMVVASAATVDMDTTAGEAIEIEQRDPEELLGVSGVRTVAEGIAAWNPVFDVTPGALIDAIVTERGVIQSPDAAQMRATFGN.

Residues 58 to 60 (RGA), Arg101, and Gln204 contribute to the substrate site. Asp245 functions as the Proton donor in the catalytic mechanism. 255-256 (NK) is a binding site for substrate.

The protein belongs to the eIF-2B alpha/beta/delta subunits family. MtnA subfamily.

It catalyses the reaction 5-(methylsulfanyl)-alpha-D-ribose 1-phosphate = 5-(methylsulfanyl)-D-ribulose 1-phosphate. The protein operates within amino-acid biosynthesis; L-methionine biosynthesis via salvage pathway; L-methionine from S-methyl-5-thio-alpha-D-ribose 1-phosphate: step 1/6. Catalyzes the interconversion of methylthioribose-1-phosphate (MTR-1-P) into methylthioribulose-1-phosphate (MTRu-1-P). In Xylella fastidiosa (strain 9a5c), this protein is Methylthioribose-1-phosphate isomerase.